A 218-amino-acid polypeptide reads, in one-letter code: Mitochondrial fission factor (218 aa).

Topologically, residues 1–198 (MAEISRIQYE…ENKERAKREM (198 aa)) are cytoplasmic. The residue at position 89 (T89) is a Phosphothreonine. S129, S131, S146, and S171 each carry phosphoserine. Residues 167 to 198 (VDAASLRRQIIKLNRRLQLLEEENKERAKREM) adopt a coiled-coil conformation. Residues 199–216 (VMYSITVAFWLLNSWLWF) traverse the membrane as a helical; Anchor for type IV membrane protein segment. Residues 217 to 218 (RR) are Mitochondrial intermembrane-facing.

It belongs to the Tango11 family. In terms of assembly, homodimer. Interacts with DNM1L. Interacts with C11orf65/MFI; the interaction inhibits MFF interaction with DNM1L.

The protein localises to the mitochondrion outer membrane. It is found in the peroxisome. It localises to the cytoplasmic vesicle. Its subcellular location is the secretory vesicle. The protein resides in the synaptic vesicle. Its function is as follows. Plays a role in mitochondrial and peroxisomal fission. Promotes the recruitment and association of the fission mediator dynamin-related protein 1 (DNM1L) to the mitochondrial surface. May be involved in regulation of synaptic vesicle membrane dynamics by recruitment of DNM1L to clathrin-containing vesicles. This chain is Mitochondrial fission factor (MFF), found in Pongo abelii (Sumatran orangutan).